The sequence spans 512 residues: Protein spinster homolog 3 (512 aa).

Residues 1-30 are disordered; the sequence is MAGGMSAECPEPGPGGLQGQSPGPGRQCPP. The next 12 helical transmembrane spans lie at 50 to 70, 84 to 104, 112 to 132, 145 to 165, 173 to 193, 204 to 224, 260 to 280, 309 to 329, 343 to 365, 377 to 397, 411 to 431, and 450 to 470; these read VLCYINLLNYMNWFIIAGVLL, GLLQTVFVSCLLLSAPVFGYL, ATMSFGILLWSGAGLSSSFIS, IVGTGSASYSTIAPTVLGDLF, VLAVFYIFIPVGSGLGYVLGS, WALRVMPCLEAVALILLILLV, FVWSTLGVTAMAFVTGALGFW, LIFGALTIMTGVIGVILGAEA, LICASSLLATAPCLYLALVLAPT, GELLLSCNWAVVADILLSVVV, VGHILGDAGSPYLTGLISSVL, and FLCCAFVIALGGGCFLLTALY. The interval 481-512 is disordered; it reads PVTGTPDSNDVDSNDLERQGLLSGAGASTEEP.

It belongs to the major facilitator superfamily. Spinster (TC 2.A.1.49) family.

The protein resides in the membrane. In terms of biological role, sphingolipid transporter. This Homo sapiens (Human) protein is Protein spinster homolog 3 (SPNS3).